The primary structure comprises 263 residues: Undecaprenyl-diphosphatase (263 aa).

Helical transmembrane passes span 1 to 21 (MSYLHAIILGIVEGITEFLPI), 41 to 61 (FTKAFEVIIQFGAIMSVLVLY), 69 to 89 (WGFYRKLFVAFLPTAIIGFVV), 96 to 116 (LMGSVQVVAWSLIIGGVILIW), 147 to 167 (AIAMIPGVSRSGATIMGGLTL), 177 to 197 (FSFFLAVPTMAAATLYKLLKI), 208 to 228 (LLLVGCAVAFVVAMIAIKFFI), and 238 to 258 (GFGYYRIVLGLVILILLYTGH).

This sequence belongs to the UppP family.

It is found in the cell inner membrane. The catalysed reaction is di-trans,octa-cis-undecaprenyl diphosphate + H2O = di-trans,octa-cis-undecaprenyl phosphate + phosphate + H(+). Functionally, catalyzes the dephosphorylation of undecaprenyl diphosphate (UPP). Confers resistance to bacitracin. This is Undecaprenyl-diphosphatase from Bdellovibrio bacteriovorus (strain ATCC 15356 / DSM 50701 / NCIMB 9529 / HD100).